The primary structure comprises 1243 residues: Plasma membrane calcium-transporting ATPase 2 (1243 aa).

Residues 1-13 (MGDMTNSDFYSKN) show a composition bias toward polar residues. The interval 1 to 24 (MGDMTNSDFYSKNQRNESSHGGEF) is disordered. Over 1 to 94 (MGDMTNSDFY…NFIPPKKPKT (94 aa)) the chain is Cytoplasmic. A phosphoserine mark is found at Ser18 and Ser27. The helical transmembrane segment at 95 to 115 (FLQLVWEALQDVTLIILEIAA) threads the bilayer. Topologically, residues 116 to 152 (IISLGLSFYHPPGESNEGCATAQGGAEDEGEAEAGWI) are extracellular. Residues 153–173 (EGAAILLSVICVVLVTAFNDW) form a helical membrane-spanning segment. Topologically, residues 174–390 (SKEKQFRGLQ…KEKSVLQGKL (217 aa)) are cytoplasmic. Residues 296 to 308 (EEKKDKKGVKKGD) are compositionally biased toward basic and acidic residues. The disordered stretch occupies residues 296-382 (EEKKDKKGVK…KKKANMHKKE (87 aa)). Composition is skewed to low complexity over residues 313–330 (PAAD…ANAS) and 337–356 (QDGS…GAAA). A helical transmembrane segment spans residues 391 to 410 (TKLAVQIGKAGLVMSAITVI). At 411–443 (ILVLYFTVDTFVVNKKPWLTECTPVYVQYFVKF) the chain is on the extracellular side. Residues 444–461 (FIIGVTVLVVAVPEGLPL) traverse the membrane as a helical segment. The Cytoplasmic portion of the chain corresponds to 462–875 (AVTISLAYSV…MWGRNVYDSI (414 aa)). Asp499 functions as the 4-aspartylphosphate intermediate in the catalytic mechanism. The Mg(2+) site is built by Asp820 and Asp824. The helical transmembrane segment at 876-895 (SKFLQFQLTVNVVAVIVAFT) threads the bilayer. Topologically, residues 896–905 (GACITQDSPL) are extracellular. A helical transmembrane segment spans residues 906–926 (KAVQMLWVNLIMDTFASLALA). The Cytoplasmic portion of the chain corresponds to 927–946 (TEPPTETLLLRKPYGRNKPL). Residues 947–969 (ISRTMMKNILGHAVYQLTLIFTL) traverse the membrane as a helical segment. Over 970-987 (LFVGEKMFQIDSGRNAPL) the chain is Extracellular. A helical transmembrane segment spans residues 988 to 1009 (HSPPSEHYTIIFNTFVMMQLFN). Residues 1010-1028 (EINARKIHGERNVFDGIFR) lie on the Cytoplasmic side of the membrane. Residues 1029–1050 (NPIFCTIVLGTFAIQIVIVQFG) traverse the membrane as a helical segment. At 1051–1060 (GKPFSCSPLQ) the chain is on the extracellular side. The helical transmembrane segment at 1061 to 1082 (LDQWMWCIFIGLGELVWGQVIA) threads the bilayer. Residues 1083–1243 (TIPTSRLKFL…SPIHSLETSL (161 aa)) are Cytoplasmic-facing. 7 positions are modified to phosphoserine: Glu1107, Ile1116, Asp1117, Arg1121, Trp1130, Phe1131, and Gln1138. The tract at residues 1123–1140 (LRRGQILWFRGLNRIQTQ) is calmodulin-binding subdomain A. Thr1139 is subject to Phosphothreonine; by PKC. The calmodulin-binding subdomain B stretch occupies residues 1141-1150 (IRVVKAFRSS). Residues Val1144, Phe1147, Arg1148, Tyr1152, Arg1161, Thr1162, Ile1175, and Ser1178 each carry the phosphoserine modification. Thr1188 bears the Phosphothreonine mark. The tract at residues 1194–1243 (AALKQNSSPPSSLNKNNSAIDSGINLTTDTSKSATSSSPGSPIHSLETSL) is disordered. Composition is skewed to low complexity over residues 1196–1211 (LKQN…KNNS) and 1220–1234 (TTDT…SPGS). Position 1201 is a phosphoserine; by PKA (Ser1201). Ser1211 bears the Phosphoserine mark.

This sequence belongs to the cation transport ATPase (P-type) (TC 3.A.3) family. Type IIB subfamily. As to quaternary structure, interacts with PDZD11. As to expression, isoforms containing segment B are found in brain, uterus, liver and kidney and in low levels in other tissues. Isoforms containing segment W are found in kidney, uterus, and pancreas. Isoforms containing segment Y are found in pancreas and in low levels in brain and heart. Isoforms containing segment Z are found in brain and heart and isoforms containing segment X are found in low levels in brain. Isoforms containing segment A are found in low levels in heart and small intestine while isoforms containing segment C are found in testis and in low levels in other tissues.

It localises to the cell membrane. Its subcellular location is the synapse. It is found in the apical cell membrane. The protein localises to the basolateral cell membrane. It carries out the reaction Ca(2+)(in) + ATP + H2O = Ca(2+)(out) + ADP + phosphate + H(+). In terms of biological role, ATP-driven Ca(2+) ion pump involved in the maintenance of basal intracellular Ca(2+) levels in specialized cells of cerebellar circuit and vestibular and cochlear systems. Uses ATP as an energy source to transport cytosolic Ca(2+) ions across the plasma membrane to the extracellular compartment. Has fast activation and Ca(2+) clearance rate suited to control fast neuronal Ca(2+) dynamics. At parallel fiber to Purkinje neuron synapse, mediates presynaptic Ca(2+) efflux in response to climbing fiber-induced Ca(2+) rise. Provides for fast return of Ca(2+) concentrations back to their resting levels, ultimately contributing to long-term depression induction and motor learning. Plays an essential role in hearing and balance. In cochlear hair cells, shuttles Ca(2+) ions from stereocilia to the endolymph and dissipates Ca(2+) transients generated by the opening of the mechanoelectrical transduction channels. Regulates Ca(2+) levels in the vestibular system, where it contributes to the formation of otoconia. In non-excitable cells, regulates Ca(2+) signaling through spatial control of Ca(2+) ions extrusion and dissipation of Ca(2+) transients generated by store-operated channels. In lactating mammary gland, allows for the high content of Ca(2+) ions in the milk. The protein is Plasma membrane calcium-transporting ATPase 2 (Atp2b2) of Rattus norvegicus (Rat).